The chain runs to 512 residues: Aldehyde dehydrogenase B (512 aa).

Catalysis depends on residues Glu268 and Cys307.

Homotetramer.

It catalyses the reaction an aldehyde + NADP(+) + H2O = a carboxylate + NADPH + 2 H(+). The catalysed reaction is acetaldehyde + NADP(+) + H2O = acetate + NADPH + 2 H(+). The enzyme catalyses chloroacetaldehyde + NADP(+) + H2O = chloroacetate + NADPH + 2 H(+). It carries out the reaction propanal + NADP(+) + H2O = propanoate + NADPH + 2 H(+). With respect to regulation, magnesium increases enzyme activity with various substrates. Functionally, catalyzes the NADP(+)-dependent oxidation of diverse aldehydes to their corresponding carboxylic acids, with a preference for acetaldehyde and chloroacetaldehyde. May play a role in detoxifying aldehydes present during stationary phase. Cannot use NAD(+) instead of NADP(+) as the electron acceptor. To a lesser extent is also able to oxidize propionaldehyde (propanal), benzaldehyde, mafosfamide, and 4-hydroperoxycyclophosphamide. Does not use either glyceraldehyde or glycolaldehyde as substrates. This is Aldehyde dehydrogenase B from Escherichia coli (strain K12).